Here is a 202-residue protein sequence, read N- to C-terminus: GTP-binding protein rho1 (202 aa).

13-20 (GDGACGKT) serves as a coordination point for GTP. Residues 35–43 (YVPTVFENY) carry the Effector region motif. Residues 60–64 (DTAGQ) and 118–121 (CKAD) contribute to the GTP site. Cys199 carries the cysteine methyl ester modification. The S-geranylgeranyl cysteine moiety is linked to residue Cys199. Positions 200–202 (ILL) are cleaved as a propeptide — removed in mature form.

It belongs to the small GTPase superfamily. Rho family.

The protein resides in the cell membrane. Its function is as follows. Involved in the regulation of cell wall growth and actin cytoskeleton organization. Activates (1,3)-beta-D-glucan synthase. This chain is GTP-binding protein rho1 (rho1), found in Schizosaccharomyces pombe (strain 972 / ATCC 24843) (Fission yeast).